Here is a 150-residue protein sequence, read N- to C-terminus: Endoribonuclease YbeY (150 aa).

Zn(2+)-binding residues include H112, H116, and H122.

This sequence belongs to the endoribonuclease YbeY family. Requires Zn(2+) as cofactor.

The protein resides in the cytoplasm. Single strand-specific metallo-endoribonuclease involved in late-stage 70S ribosome quality control and in maturation of the 3' terminus of the 16S rRNA. The chain is Endoribonuclease YbeY from Bdellovibrio bacteriovorus (strain ATCC 15356 / DSM 50701 / NCIMB 9529 / HD100).